The chain runs to 211 residues: Large ribosomal subunit protein uL3 (211 aa).

At Q150 the chain carries N5-methylglutamine.

This sequence belongs to the universal ribosomal protein uL3 family. Part of the 50S ribosomal subunit. Forms a cluster with proteins L14 and L19. Methylated by PrmB.

In terms of biological role, one of the primary rRNA binding proteins, it binds directly near the 3'-end of the 23S rRNA, where it nucleates assembly of the 50S subunit. This chain is Large ribosomal subunit protein uL3, found in Pseudomonas fluorescens (strain SBW25).